A 329-amino-acid polypeptide reads, in one-letter code: GMP reductase (329 aa).

C178 serves as the catalytic Thioimidate intermediate. An NADP(+)-binding site is contributed by 207–230 (VIADGGIRTHGDIAKSIRMGATMV).

It belongs to the IMPDH/GMPR family. GuaC type 2 subfamily.

The catalysed reaction is IMP + NH4(+) + NADP(+) = GMP + NADPH + 2 H(+). Catalyzes the irreversible NADPH-dependent deamination of GMP to IMP. It functions in the conversion of nucleobase, nucleoside and nucleotide derivatives of G to A nucleotides, and in maintaining the intracellular balance of A and G nucleotides. The protein is GMP reductase of Lactococcus lactis subsp. lactis (strain IL1403) (Streptococcus lactis).